We begin with the raw amino-acid sequence, 309 residues long: Aurora kinase C (309 aa).

The tract at residues methionine 1–proline 33 is disordered. Residues threonine 22–serine 32 show a composition bias toward polar residues. The region spanning phenylalanine 43–valine 293 is the Protein kinase domain. Residues leucine 49–valine 57 and lysine 72 contribute to the ATP site. Catalysis depends on aspartate 166, which acts as the Proton acceptor. Threonine 198 carries the phosphothreonine; by PKA modification. Residues tryptophan 292 to serine 309 form an interaction with BIRC5 region.

The protein belongs to the protein kinase superfamily. Ser/Thr protein kinase family. Aurora subfamily. Component of the chromosomal passenger complex (CPC) composed of at least BIRC5/survivin, CDCA8/borealin, INCENP, AURKB or AURKC; predominantly independent AURKB- and AURKC-containing complexes exist; in the complex interacts directly with BIRC5/survivin and INCENP. Interacts with TACC1. In terms of tissue distribution, isoform 1 and isoform 2 are expressed in testis. Elevated expression levels were seen only in a subset of cancer cell lines such as Hep-G2, Huh-7 and HeLa. Expression is maximum at M phase.

The protein resides in the nucleus. Its subcellular location is the chromosome. The protein localises to the centromere. It is found in the cytoplasm. It localises to the cytoskeleton. The protein resides in the spindle. The enzyme catalyses L-seryl-[protein] + ATP = O-phospho-L-seryl-[protein] + ADP + H(+). It catalyses the reaction L-threonyl-[protein] + ATP = O-phospho-L-threonyl-[protein] + ADP + H(+). With respect to regulation, okadaic acid, an inhibitor of protein phosphatase 1 (PP1), protein phosphatase 2A (PP2A) and protein phosphatase 5 (PP5), increases AURKC activity. AURKC is also stabilized through its interaction with INCENP, which also acts as an activator. Serine/threonine-protein kinase component of the chromosomal passenger complex (CPC), a complex that acts as a key regulator of mitosis. The CPC complex has essential functions at the centromere in ensuring correct chromosome alignment and segregation and is required for chromatin-induced microtubule stabilization and spindle assembly. Also plays a role in meiosis and more particularly in spermatogenesis. Has redundant cellular functions with AURKB and can rescue an AURKB knockdown. Like AURKB, AURKC phosphorylates histone H3 at 'Ser-10' and 'Ser-28'. AURKC phosphorylates the CPC complex subunits BIRC5/survivin and INCENP leading to increased AURKC activity. Phosphorylates TACC1, another protein involved in cell division, at 'Ser-228'. This Homo sapiens (Human) protein is Aurora kinase C (AURKC).